A 530-amino-acid polypeptide reads, in one-letter code: Laccase-2 (530 aa).

Residues 1 to 23 (MLLSSAFVGSCLAILNFAAAVSA) form the signal peptide. Plastocyanin-like domains lie at 36 to 154 (NKVI…YDPE) and 167 to 311 (TTII…RYTN). N82 carries N-linked (GlcNAc...) asparagine glycosylation. 2 residues coordinate Cu cation: H88 and H90. Intrachain disulfides connect C109–C520 and C141–C228. N-linked (GlcNAc...) asparagine glycosylation occurs at N120. Residues H133 and H135 each coordinate Cu cation. N191, N240, N292, N311, N366, N375, N392, and N412 each carry an N-linked (GlcNAc...) asparagine glycan. Positions 379–504 (YVNPTVPVLL…FAVVLAEAPQ (126 aa)) constitute a Plastocyanin-like 3 domain. Cu cation-binding residues include H428, H431, H433, H484, C485, H486, and H490.

The protein belongs to the multicopper oxidase family. It depends on Cu cation as a cofactor.

The protein resides in the secreted. It catalyses the reaction 4 hydroquinone + O2 = 4 benzosemiquinone + 2 H2O. Inhibited by chloride ions. Inhibited by citrate. Inhibited by oxalate. Activated by acetate. Functionally, in vitro, has activity towards 2,2'-azino-bis(3-ethylbenzthiazoline-6-sulfonic acid) (ABTS), 2,6-dimethoxy-phenol, and guaiacol. Although brown rot fungi preferentially degrade hemicellulose and cellulose, the enzyme may contribute to generating small amounts of lignin breakdown products required for catalytic reactions. The protein is Laccase-2 of Fomitopsis schrenkii (Brown rot fungus).